The primary structure comprises 133 residues: Ribonuclease P protein component (133 aa).

This sequence belongs to the RnpA family. In terms of assembly, consists of a catalytic RNA component (M1 or rnpB) and a protein subunit.

The catalysed reaction is Endonucleolytic cleavage of RNA, removing 5'-extranucleotides from tRNA precursor.. RNaseP catalyzes the removal of the 5'-leader sequence from pre-tRNA to produce the mature 5'-terminus. It can also cleave other RNA substrates such as 4.5S RNA. The protein component plays an auxiliary but essential role in vivo by binding to the 5'-leader sequence and broadening the substrate specificity of the ribozyme. In Bartonella quintana (strain Toulouse) (Rochalimaea quintana), this protein is Ribonuclease P protein component.